A 431-amino-acid polypeptide reads, in one-letter code: Serine hydroxymethyltransferase 2 (431 aa).

(6S)-5,6,7,8-tetrahydrofolate-binding positions include leucine 131 and glycine 135 to leucine 137. An N6-(pyridoxal phosphate)lysine modification is found at lysine 240.

It belongs to the SHMT family. As to quaternary structure, homodimer. Requires pyridoxal 5'-phosphate as cofactor.

It localises to the cytoplasm. The enzyme catalyses (6R)-5,10-methylene-5,6,7,8-tetrahydrofolate + glycine + H2O = (6S)-5,6,7,8-tetrahydrofolate + L-serine. It participates in one-carbon metabolism; tetrahydrofolate interconversion. The protein operates within amino-acid biosynthesis; glycine biosynthesis; glycine from L-serine: step 1/1. In terms of biological role, catalyzes the reversible interconversion of serine and glycine with tetrahydrofolate (THF) serving as the one-carbon carrier. This reaction serves as the major source of one-carbon groups required for the biosynthesis of purines, thymidylate, methionine, and other important biomolecules. Also exhibits THF-independent aldolase activity toward beta-hydroxyamino acids, producing glycine and aldehydes, via a retro-aldol mechanism. In Vibrio parahaemolyticus serotype O3:K6 (strain RIMD 2210633), this protein is Serine hydroxymethyltransferase 2.